The chain runs to 71 residues: Small ribosomal subunit protein bS18 (71 aa).

The protein belongs to the bacterial ribosomal protein bS18 family. As to quaternary structure, part of the 30S ribosomal subunit. Forms a tight heterodimer with protein bS6.

Binds as a heterodimer with protein bS6 to the central domain of the 16S rRNA, where it helps stabilize the platform of the 30S subunit. The chain is Small ribosomal subunit protein bS18 from Microcystis aeruginosa (strain NIES-843 / IAM M-2473).